The sequence spans 198 residues: Crinkler effector protein BLC01 (198 aa).

An N-terminal signal peptide occupies residues 1–15 (MMVKLICAIVDIAGA). The LQLFLAK domain stretch occupies residues 16–55 (AFPIDIDTNELVGDFKKVIKAENSRTIACDANDLRLFLAK). The DWL domain stretch occupies residues 56 to 113 (TDGRWLTEFEVQNGVADISVFEELDVVGAPLNMIGLSEETVSSVAITKELVKAKKTPL). The HVLVXXP motif motif lies at 114 to 119 (HVLVVP).

Belongs to the Crinkler effector family.

The protein localises to the secreted. Its subcellular location is the host cell. Functionally, secreted effector that elicits necrosis in host plants, a characteristic of plant innate immunity. This chain is Crinkler effector protein BLC01, found in Bremia lactucae (Lettuce downy mildew).